The chain runs to 313 residues: 2-oxoglutarate-dependent dioxygenase eupC (313 aa).

Residues 187–284 (PSIPMRFLHY…LNAKALDGSG (98 aa)) enclose the Fe2OG dioxygenase domain. Histidine 212, aspartate 214, and histidine 263 together coordinate Fe cation. Lysine 274 contributes to the 2-oxoglutarate binding site.

This sequence belongs to the iron/ascorbate-dependent oxidoreductase family. Fe(2+) serves as cofactor.

The protein operates within secondary metabolite biosynthesis; terpenoid biosynthesis. Its function is as follows. 2-oxoglutarate-dependent dioxygenase; part of the gene cluster that mediates the biosynthesis of eupenifeldin, a bistropolone meroterpenoid that acts as an antitumor agent. The first step of eupenifeldin biosynthesis is the biosynthesis of 3-methylorcinaldehyde performed by the non-reducing polyketide synthase eupA. Oxidative dearomatization of 3-methylorcinaldehyde likely catalyzed by the FAD-dependent monooxygenase eupB is followed by oxidative ring expansion by the 2-oxoglutarate-dependent dioxygenase eupC to provide the first tropolone metabolite, tropolone stipitaldehyde. In parallel, generation of sesquiterpene alpha-humulene from farnesylpyrophosphate (FPP) is catalyzed by the terpene cyclase eupE. The cytochrome P450 monooxygenase eupD then hydroxylates humulene to humulenol. The putative Diels-Alderase eupF probably catalyzes the formation of the tropolone-humulene skeleton by linking humulenol and the polyketide moiety. The short-chain dehydrogenase/reductase eupG and the flavin-dependent monooxygenase eupH are also essential for eupenifeldin biosynthesis and are likely the additional decorating enzymes of the tropolone-humulene skeleton to produce final eupenifeldin or derivatives. This chain is 2-oxoglutarate-dependent dioxygenase eupC, found in Phoma sp.